Reading from the N-terminus, the 335-residue chain is Beta-ketoacyl-[acyl-carrier-protein] synthase III (335 aa).

Catalysis depends on residues cysteine 116 and histidine 256. An ACP-binding region spans residues glutamine 257–arginine 261. Asparagine 286 is a catalytic residue.

Belongs to the thiolase-like superfamily. FabH family. Homodimer.

It is found in the cytoplasm. It carries out the reaction malonyl-[ACP] + acetyl-CoA + H(+) = 3-oxobutanoyl-[ACP] + CO2 + CoA. The protein operates within lipid metabolism; fatty acid biosynthesis. Its function is as follows. Catalyzes the condensation reaction of fatty acid synthesis by the addition to an acyl acceptor of two carbons from malonyl-ACP. Catalyzes the first condensation reaction which initiates fatty acid synthesis and may therefore play a role in governing the total rate of fatty acid production. Possesses both acetoacetyl-ACP synthase and acetyl transacylase activities. Its substrate specificity determines the biosynthesis of branched-chain and/or straight-chain of fatty acids. This is Beta-ketoacyl-[acyl-carrier-protein] synthase III from Porphyromonas gingivalis (strain ATCC BAA-308 / W83).